The chain runs to 440 residues: UDP-N-acetylmuramoylalanine--D-glutamate ligase (440 aa).

Residue 115–121 (GSNGKST) coordinates ATP.

The protein belongs to the MurCDEF family.

It is found in the cytoplasm. It catalyses the reaction UDP-N-acetyl-alpha-D-muramoyl-L-alanine + D-glutamate + ATP = UDP-N-acetyl-alpha-D-muramoyl-L-alanyl-D-glutamate + ADP + phosphate + H(+). Its pathway is cell wall biogenesis; peptidoglycan biosynthesis. Its function is as follows. Cell wall formation. Catalyzes the addition of glutamate to the nucleotide precursor UDP-N-acetylmuramoyl-L-alanine (UMA). The chain is UDP-N-acetylmuramoylalanine--D-glutamate ligase from Aliivibrio fischeri (strain MJ11) (Vibrio fischeri).